The primary structure comprises 304 residues: Protoheme IX farnesyltransferase (304 aa).

Helical transmembrane passes span 32 to 52 (VVAL…PGSV), 54 to 74 (LQPL…AAAF), 104 to 124 (ALTF…TLVN), 126 to 146 (LTAW…TAYL), 154 to 174 (IVVG…SVTG), 180 to 200 (ALLL…ALAI), 226 to 246 (CILL…LVGM), 247 to 267 (CGPV…YKAW), and 284 to 304 (FSIY…YLWV).

It belongs to the UbiA prenyltransferase family. Protoheme IX farnesyltransferase subfamily.

It is found in the cell inner membrane. The catalysed reaction is heme b + (2E,6E)-farnesyl diphosphate + H2O = Fe(II)-heme o + diphosphate. It functions in the pathway porphyrin-containing compound metabolism; heme O biosynthesis; heme O from protoheme: step 1/1. In terms of biological role, converts heme B (protoheme IX) to heme O by substitution of the vinyl group on carbon 2 of heme B porphyrin ring with a hydroxyethyl farnesyl side group. The chain is Protoheme IX farnesyltransferase from Shewanella sediminis (strain HAW-EB3).